Consider the following 159-residue polypeptide: NADH-quinone oxidoreductase subunit I (159 aa).

4Fe-4S ferredoxin-type domains follow at residues 51 to 80 and 90 to 119; these read RRYE…IEAD and TRYD…EGPN. Cysteine 60, cysteine 63, cysteine 66, cysteine 70, cysteine 99, cysteine 102, cysteine 105, and cysteine 109 together coordinate [4Fe-4S] cluster.

Belongs to the complex I 23 kDa subunit family. NDH-1 is composed of 14 different subunits. Subunits NuoA, H, J, K, L, M, N constitute the membrane sector of the complex. [4Fe-4S] cluster is required as a cofactor.

Its subcellular location is the cell inner membrane. The catalysed reaction is a quinone + NADH + 5 H(+)(in) = a quinol + NAD(+) + 4 H(+)(out). NDH-1 shuttles electrons from NADH, via FMN and iron-sulfur (Fe-S) centers, to quinones in the respiratory chain. The immediate electron acceptor for the enzyme in this species is believed to be ubiquinone. Couples the redox reaction to proton translocation (for every two electrons transferred, four hydrogen ions are translocated across the cytoplasmic membrane), and thus conserves the redox energy in a proton gradient. This chain is NADH-quinone oxidoreductase subunit I, found in Rickettsia akari (strain Hartford).